Consider the following 366-residue polypeptide: GTPase Obg (366 aa).

Residues 1–162 (MRFVDEAVIK…KSLRLELKIL (162 aa)) form the Obg domain. Positions 125–150 (RGGKGNEHFKSSTMQAPRFSQPGEPG) are disordered. In terms of domain architecture, OBG-type G spans 163-335 (ADAGLLGLPN…VVSEMWRMLA (173 aa)). Residues 169–176 (GLPNAGKS), 194–198 (FTTLV), 218–221 (DIPG), 288–291 (NKID), and 316–318 (SAL) each bind GTP. Residues Ser-176 and Thr-196 each contribute to the Mg(2+) site.

Belongs to the TRAFAC class OBG-HflX-like GTPase superfamily. OBG GTPase family. In terms of assembly, monomer. Mg(2+) is required as a cofactor.

The protein resides in the cytoplasm. In terms of biological role, an essential GTPase which binds GTP, GDP and possibly (p)ppGpp with moderate affinity, with high nucleotide exchange rates and a fairly low GTP hydrolysis rate. Plays a role in control of the cell cycle, stress response, ribosome biogenesis and in those bacteria that undergo differentiation, in morphogenesis control. In Oleidesulfovibrio alaskensis (strain ATCC BAA-1058 / DSM 17464 / G20) (Desulfovibrio alaskensis), this protein is GTPase Obg.